Reading from the N-terminus, the 449-residue chain is Adenylosuccinate synthetase (449 aa).

Residues 12-18 and 40-42 contribute to the GTP site; these read GDEGKGK and GHT. The active-site Proton acceptor is D13. 2 residues coordinate Mg(2+): D13 and G40. IMP contacts are provided by residues 13–16, 38–41, T128, R142, Q223, T238, and R302; these read DEGK and NAGH. The active-site Proton donor is H41. 298-304 contacts substrate; it reads TTTGRQR. GTP is bound by residues R304, 330–332, and 412–414; these read KLD and SLG.

This sequence belongs to the adenylosuccinate synthetase family. In terms of assembly, homodimer. Mg(2+) serves as cofactor.

It localises to the cytoplasm. The enzyme catalyses IMP + L-aspartate + GTP = N(6)-(1,2-dicarboxyethyl)-AMP + GDP + phosphate + 2 H(+). It functions in the pathway purine metabolism; AMP biosynthesis via de novo pathway; AMP from IMP: step 1/2. Functionally, plays an important role in the de novo pathway of purine nucleotide biosynthesis. Catalyzes the first committed step in the biosynthesis of AMP from IMP. The polypeptide is Adenylosuccinate synthetase (Synechococcus sp. (strain JA-2-3B'a(2-13)) (Cyanobacteria bacterium Yellowstone B-Prime)).